The primary structure comprises 423 residues: Divalent metal cation transporter MntH (423 aa).

A run of 11 helical transmembrane segments spans residues 31 to 51, 58 to 78, 116 to 136, 137 to 157, 168 to 188, 213 to 233, 254 to 274, 302 to 322, 342 to 362, 363 to 383, and 401 to 421; these read LMML…GNFA, SSFG…AMLI, IIAI…FQLV, FGIS…MILI, VVIG…LFFA, AAGI…SALF, IAMV…AAVF, VLFG…GTMA, FITM…TDIL, VMSQ…LLIF, and YAGV…MVTL.

The protein belongs to the NRAMP family.

It is found in the cell inner membrane. H(+)-stimulated, divalent metal cation uptake system. The polypeptide is Divalent metal cation transporter MntH (Vibrio campbellii (strain ATCC BAA-1116)).